Here is a 548-residue protein sequence, read N- to C-terminus: Probable zinc metalloprotease EGY1, chloroplastic (548 aa).

The N-terminal 18 residues, 1–18 (MGTLTSVAFAAAVNIRFR), are a transit peptide targeting the chloroplast. The segment covering 61–76 (NSNRDDSIGENGETHK) has biased composition (basic and acidic residues). The segment at 61–116 (NSNRDDSIGENGETHKSSVVKTATFEEEDEETSKSSSTTSSSNEFGSDKTSMPSTI) is disordered. Over residues 103–116 (NEFGSDKTSMPSTI) the composition is skewed to polar residues. 8 helical membrane passes run 242–262 (YVIA…LGIA), 290–310 (LYPF…ILLF), 326–346 (LSIP…ITQF), 361–381 (LAGP…GLFL), 388–408 (ANDL…LGLI), 416–436 (AALH…WCGL), 474–494 (MLGL…YVLI), and 516–536 (ALVG…WDEL).

This sequence belongs to the peptidase M50B family. As to expression, expressed in roots, leaves, cotyledons, hypocotyls, stems, flowers and siliques.

Its subcellular location is the plastid. The protein resides in the chloroplast membrane. Its function is as follows. Membrane-associated and ATP-independent metalloprotease required for development of both thylakoid grana and well-organized lamellae in chloroplast. Required for the accumulation of chlorophyll and chlorophyll a/b binding (CAB) proteins (from both PS I and PS II) in chloroplast membranes, and for grana formation and normal chloroplast development. Involved in the regulation of nuclear gene expression in response to ammonium stress and interacts with ABA signaling. Carries out beta-casein degradation in an ATP-independent manner in vitro. In Arabidopsis thaliana (Mouse-ear cress), this protein is Probable zinc metalloprotease EGY1, chloroplastic (EGY1).